The chain runs to 247 residues: Anionic trypsin (247 aa).

A signal peptide spans 1 to 15 (MNPLLILAFLGAAVA). Residues 16 to 23 (TPTDDDDK) constitute a propeptide, activation peptide. A Peptidase S1 domain is found at 24–244 (IVGGYTCEEN…FVDWIQSTIA (221 aa)). 6 disulfides stabilise this stretch: Cys-30-Cys-160, Cys-48-Cys-64, Cys-132-Cys-233, Cys-139-Cys-206, Cys-171-Cys-185, and Cys-196-Cys-220. The Charge relay system role is filled by His-63. Glu-75, Asn-77, Val-80, and Glu-85 together coordinate Ca(2+). Residue Asp-107 is the Charge relay system of the active site. The active-site Charge relay system is the Ser-200.

The protein belongs to the peptidase S1 family. Ca(2+) is required as a cofactor.

The protein resides in the secreted. It localises to the extracellular space. It carries out the reaction Preferential cleavage: Arg-|-Xaa, Lys-|-Xaa.. The polypeptide is Anionic trypsin (Canis lupus familiaris (Dog)).